Consider the following 213-residue polypeptide: Protein big brother (213 aa).

Belongs to the CBF-beta family.

Its subcellular location is the nucleus. Regulates the DNA-binding properties of Runt. In Drosophila melanogaster (Fruit fly), this protein is Protein big brother (Bgb).